A 302-amino-acid polypeptide reads, in one-letter code: MAEITAQMVKELREITGLGMMECKKALTEASGDMKAAEDLLRIKSGAKASKAAGRTAAEGIVAAHIARDGKSGALVEVNCETDFVARNEDFIGFAHSLAELLTTESIGDNEALANARLSNGESVEEFRKALVMKLGENISIRRFARHQVAGAQDRLASYLHGAKIGVMVDYTGGDPALGKDLAMHIAASKPVCVSSEQVSPELLERERQIYTAQAAESGKPADIVARMVDGRIAKYLAEITLLGQPFVKNPDQTVKQLLAEKSAQVNGFTLYIVGEGIEKKSGDFAAEVMAQVGQAKQEKAS.

The tract at residues 82-85 (TDFV) is involved in Mg(2+) ion dislocation from EF-Tu.

Belongs to the EF-Ts family.

It localises to the cytoplasm. Associates with the EF-Tu.GDP complex and induces the exchange of GDP to GTP. It remains bound to the aminoacyl-tRNA.EF-Tu.GTP complex up to the GTP hydrolysis stage on the ribosome. The chain is Elongation factor Ts from Nitrosospira multiformis (strain ATCC 25196 / NCIMB 11849 / C 71).